Here is a 692-residue protein sequence, read N- to C-terminus: Eomesodermin (692 aa).

The segment at 35-135 (NSSTPNLPHT…LNTAVPTSAP (101 aa)) is disordered. The T-box DNA-binding region spans 263-443 (LWLKFHRHQT…HNPFAKGFRD (181 aa)). Residues 578–692 (SMAGWGSRGS…LGYYSFYSSS (115 aa)) form a required for transcription activation region. Disordered stretches follow at residues 595-614 (TSLP…DLLP) and 621-673 (EMSS…DIGT). Composition is skewed to low complexity over residues 596-609 (SLPW…SGFS) and 654-665 (SPSTSSNENSPP).

Its subcellular location is the nucleus. Functions as a transcriptional activator playing a crucial role during development. Functions in gastrulation, regulating mesoderm differentiation. Activates wnt8, t/bra, chrd and mix-A/mix.1 expression. The chain is Eomesodermin (eomes) from Xenopus laevis (African clawed frog).